The chain runs to 526 residues: Bifunctional purine biosynthesis protein PurH (526 aa).

The MGS-like domain occupies 1–147 (MSVIKRALIS…KNWKHVAIVT (147 aa)).

This sequence belongs to the PurH family.

The enzyme catalyses (6R)-10-formyltetrahydrofolate + 5-amino-1-(5-phospho-beta-D-ribosyl)imidazole-4-carboxamide = 5-formamido-1-(5-phospho-D-ribosyl)imidazole-4-carboxamide + (6S)-5,6,7,8-tetrahydrofolate. It carries out the reaction IMP + H2O = 5-formamido-1-(5-phospho-D-ribosyl)imidazole-4-carboxamide. The protein operates within purine metabolism; IMP biosynthesis via de novo pathway; 5-formamido-1-(5-phospho-D-ribosyl)imidazole-4-carboxamide from 5-amino-1-(5-phospho-D-ribosyl)imidazole-4-carboxamide (10-formyl THF route): step 1/1. It participates in purine metabolism; IMP biosynthesis via de novo pathway; IMP from 5-formamido-1-(5-phospho-D-ribosyl)imidazole-4-carboxamide: step 1/1. This chain is Bifunctional purine biosynthesis protein PurH, found in Neisseria gonorrhoeae (strain ATCC 700825 / FA 1090).